The sequence spans 287 residues: MSEIGLVKIYFGKVRDLYEIDDKRMLMVASDRLSAFDVILDDPIPSKGEILTQISNFWFKKLAHIMPNHFTGQTVYDVLPENEAKALEKRAVVAKKLTPVKVEAIVRGYLAGSGWKDYQKTGSVCGIQLPEGMQEAQQLPEVIFTPSTKAAVGDHDENISFEECGRIIGKELAEEVRAKAVRLYTEAAEYAKSRGIIICDTKFEFGLDENGTLTLMDEVLTPDSSRFWPADQYKVGTNPPSFDKQFVRDWLEQSGWNKKAPAPKVPADVIQKTVEKYREALTLLTQD.

This sequence belongs to the SAICAR synthetase family.

It catalyses the reaction 5-amino-1-(5-phospho-D-ribosyl)imidazole-4-carboxylate + L-aspartate + ATP = (2S)-2-[5-amino-1-(5-phospho-beta-D-ribosyl)imidazole-4-carboxamido]succinate + ADP + phosphate + 2 H(+). It participates in purine metabolism; IMP biosynthesis via de novo pathway; 5-amino-1-(5-phospho-D-ribosyl)imidazole-4-carboxamide from 5-amino-1-(5-phospho-D-ribosyl)imidazole-4-carboxylate: step 1/2. The chain is Phosphoribosylaminoimidazole-succinocarboxamide synthase from Neisseria meningitidis serogroup B (strain ATCC BAA-335 / MC58).